Reading from the N-terminus, the 406-residue chain is Probable 26S proteasome regulatory subunit 10B (406 aa).

191 to 198 (GPPGTGKT) is a binding site for ATP.

It belongs to the AAA ATPase family.

It is found in the cytoplasm. It localises to the nucleus. Its function is as follows. The 26S proteasome is involved in the ATP-dependent degradation of ubiquitinated proteins. The regulatory (or ATPase) complex confers ATP dependency and substrate specificity to the 26S complex. This chain is Probable 26S proteasome regulatory subunit 10B (rpt-4), found in Caenorhabditis elegans.